The sequence spans 280 residues: Pyridoxal 5'-phosphate synthase subunit PdxS (280 aa).

Asp-12 contributes to the D-ribose 5-phosphate binding site. Lys-69 (schiff-base intermediate with D-ribose 5-phosphate) is an active-site residue. Gly-141 lines the D-ribose 5-phosphate pocket. Arg-153 contributes to the D-glyceraldehyde 3-phosphate binding site. Residues Gly-202 and 223–224 contribute to the D-ribose 5-phosphate site; that span reads GS.

Belongs to the PdxS/SNZ family. As to quaternary structure, in the presence of PdxT, forms a dodecamer of heterodimers.

The catalysed reaction is aldehydo-D-ribose 5-phosphate + D-glyceraldehyde 3-phosphate + L-glutamine = pyridoxal 5'-phosphate + L-glutamate + phosphate + 3 H2O + H(+). The protein operates within cofactor biosynthesis; pyridoxal 5'-phosphate biosynthesis. In terms of biological role, catalyzes the formation of pyridoxal 5'-phosphate from ribose 5-phosphate (RBP), glyceraldehyde 3-phosphate (G3P) and ammonia. The ammonia is provided by the PdxT subunit. Can also use ribulose 5-phosphate and dihydroxyacetone phosphate as substrates, resulting from enzyme-catalyzed isomerization of RBP and G3P, respectively. In Fusobacterium nucleatum subsp. nucleatum (strain ATCC 25586 / DSM 15643 / BCRC 10681 / CIP 101130 / JCM 8532 / KCTC 2640 / LMG 13131 / VPI 4355), this protein is Pyridoxal 5'-phosphate synthase subunit PdxS.